Here is a 249-residue protein sequence, read N- to C-terminus: Voltage-gated potassium channel subunit beta-3 (249 aa).

Positions 44, 74, 75, 100, 129, 130, 131, 132, 133, 134, 140, 150, 209, 211, 215, and 218 each coordinate NADP(+).

This sequence belongs to the shaker potassium channel beta subunit family. As to quaternary structure, forms heteromultimeric complex with alpha subunits. Interacts with KCNA5 and KCNB2. As to expression, strong expression in brain, with highest levels in neocortical and allocortical regions, hippocampus, olfactory bulb and cerebellum. Also strong in kidney. Weak expression in lung, skeletal muscle and heart.

The protein resides in the cytoplasm. In terms of biological role, regulatory subunit of the voltage-gated potassium (Kv) channels composed of pore-forming and potassium-conducting alpha subunits and of regulatory beta subunit. The beta-3/KCNAB3 subunit may mediate closure of potassium channels. Enhances the expression of Kv2.2/KCNB2 alpha subunit-containing Kv channels but not Kv2.1/KCNB1. May display nicotinamide adenine dinucleotide phosphate (NADPH)-dependent aldoketoreductase activity. The binding of oxidized and reduced NADP(H) cofactors may be required for the regulation of potassium channel activity. The polypeptide is Voltage-gated potassium channel subunit beta-3 (Mus musculus (Mouse)).